The following is a 450-amino-acid chain: Molybdate-anion transporter (450 aa).

The next 12 helical transmembrane spans lie at 1 to 21, 43 to 63, 79 to 99, 128 to 148, 174 to 194, 195 to 215, 249 to 269, 278 to 298, 311 to 331, 344 to 364, 376 to 396, and 409 to 429; these read MLVT…GLEL, LDFY…APYL, ILYV…SSLV, FVLL…FSAF, AAFW…AVAS, WIGL…ALAG, VLLL…FVFL, GAPL…GSSL, PMHL…MLTF, FIAF…MSFL, GVLN…LLVL, and FSIC…LFTV.

It belongs to the major facilitator superfamily.

Its subcellular location is the cell membrane. Its function is as follows. Mediates high-affinity intracellular uptake of the rare oligo-element molybdenum. This Pongo abelii (Sumatran orangutan) protein is Molybdate-anion transporter (MFSD5).